Here is a 347-residue protein sequence, read N- to C-terminus: Eukaryotic translation initiation factor 3 subunit H (347 aa).

The region spanning 1–142 (MKIMKHCSQT…LRAFRLSPRF (142 aa)) is the MPN domain.

Belongs to the eIF-3 subunit H family. As to quaternary structure, component of the eukaryotic translation initiation factor 3 (eIF-3) complex.

The protein resides in the cytoplasm. Component of the eukaryotic translation initiation factor 3 (eIF-3) complex, which is involved in protein synthesis of a specialized repertoire of mRNAs and, together with other initiation factors, stimulates binding of mRNA and methionyl-tRNAi to the 40S ribosome. The eIF-3 complex specifically targets and initiates translation of a subset of mRNAs involved in cell proliferation. This is Eukaryotic translation initiation factor 3 subunit H from Neosartorya fischeri (strain ATCC 1020 / DSM 3700 / CBS 544.65 / FGSC A1164 / JCM 1740 / NRRL 181 / WB 181) (Aspergillus fischerianus).